The chain runs to 353 residues: ATP-dependent kinase YFH7 (353 aa).

Residue 31–39 (GSPGSGKST) coordinates ATP.

Belongs to the YFH7 family.

In terms of biological role, ATP-dependent kinase that could be involved in endoplasmic reticulum membrane assembly. The sequence is that of ATP-dependent kinase YFH7 (YFH7) from Saccharomyces cerevisiae (strain Lalvin EC1118 / Prise de mousse) (Baker's yeast).